We begin with the raw amino-acid sequence, 227 residues long: MPTIIDKLSDALHLHSHQSTFDSKVTVIFVLGGPGAGKGTQCARLVEDFSFSHLSAGDLLRAEQHREGSEYGQLIQTCIKEGSIVPMEVTVKLLENAMTATLAERRSGEGWTDGQGRFLIDGFPRKMDQAEKFEHDVGKATAVLFFSTTQEVMLDRLLERGKTSGREDDNVESIKKRFNTYKEQTMPVIEHYEKLGKVIEIDSSVSIEEVHQKTRSAVAKLLSGSTA.

Residue 35-40 coordinates ATP; sequence GAGKGT. Residues 55–85 are NMP; it reads SAGDLLRAEQHREGSEYGQLIQTCIKEGSIV. A ribonucleoside 5'-phosphate is bound by residues Arg-61, 83 to 85, 122 to 125, and Gln-129; these read SIV and GFPR. Residues 159–169 form an LID region; that stretch reads ERGKTSGREDD. An ATP-binding site is contributed by Arg-160. A ribonucleoside 5'-phosphate contacts are provided by Arg-166 and Arg-177. Val-205 serves as a coordination point for ATP.

This sequence belongs to the adenylate kinase family. UMP-CMP kinase subfamily. In terms of assembly, monomer. Mg(2+) serves as cofactor.

The protein localises to the cytoplasm. The protein resides in the nucleus. It carries out the reaction UMP + ATP = UDP + ADP. In terms of biological role, catalyzes the phosphorylation of pyrimidine nucleoside monophosphates at the expense of ATP. Plays an important role in de novo pyrimidine nucleotide biosynthesis. Has preference for UMP and CMP as phosphate acceptors, but can also use AMP and dCMP to a lesser extent. May play a role during the formation of basidiospores in the gill tissue. The sequence is that of UMP-CMP kinase (uck1) from Lentinula edodes (Shiitake mushroom).